Here is a 722-residue protein sequence, read N- to C-terminus: Probable acyl-activating enzyme 16, chloroplastic (722 aa).

A chloroplast-targeting transit peptide spans 1–47 (MASTSLGASILVSHCSSAPEFQVSGMRLVFGYKAFGCRTSRRGFRVR).

It belongs to the ATP-dependent AMP-binding enzyme family.

It localises to the plastid. Its subcellular location is the chloroplast. In terms of biological role, may be involved in the activation of fatty acids to acyl-carrier-protein. This Arabidopsis thaliana (Mouse-ear cress) protein is Probable acyl-activating enzyme 16, chloroplastic (AAE16).